Here is a 451-residue protein sequence, read N- to C-terminus: POU domain, class 3, transcription factor 1 (451 aa).

Disordered stretches follow at residues 1 to 21 (MATT…GTGP), 69 to 114 (AHPQ…GFHA), 127 to 154 (AWAQ…HQPQ), 186 to 253 (GLHH…PSSD), and 395 to 451 (KRMT…GSVQ). 3 stretches are compositionally biased toward gly residues: residues 11-20 (GPGGGAGGTG), 76-85 (TGGGGGGDWA), and 95-112 (AGGG…GGGF). Residues 190-199 (ALHEDGHEAQ) are compositionally biased toward basic and acidic residues. The span at 220–232 (AGGLHAAAAHLHP) shows a compositional bias: low complexity. In terms of domain architecture, POU-specific spans 247 to 321 (EDAPSSDDLE…LLNKWLEETD (75 aa)). The homeobox DNA-binding region spans 339-398 (KRKKRTSIEVGVKGALESHFLKCPKPSAHEITGLADSLQLEKEVVRVWFCNRRQKEKRMT). A compositionally biased stretch (pro residues) spans 427-436 (PSAPPPPPPA).

The protein belongs to the POU transcription factor family. Class-3 subfamily. In terms of tissue distribution, expressed in embryonal stem cells and in the developing brain.

It is found in the nucleus. Its function is as follows. Transcription factor that binds to the octamer motif (5'-ATTTGCAT-3'). Acts as a transcriptional activator when binding cooperatively with SOX4, SOX11, or SOX12 to gene promoters. Acts as a transcriptional repressor of myelin-specific genes. In Homo sapiens (Human), this protein is POU domain, class 3, transcription factor 1 (POU3F1).